Consider the following 644-residue polypeptide: Exoribonuclease 2 (644 aa).

The region spanning 189–516 (RRDLTALDFV…NHRLLKAIIK (328 aa)) is the RNB domain. The S1 motif domain occupies 561–643 (DTRFAAEIID…ETRSIIARPA (83 aa)).

The protein belongs to the RNR ribonuclease family. RNase II subfamily.

The protein resides in the cytoplasm. The enzyme catalyses Exonucleolytic cleavage in the 3'- to 5'-direction to yield nucleoside 5'-phosphates.. In terms of biological role, involved in mRNA degradation. Hydrolyzes single-stranded polyribonucleotides processively in the 3' to 5' direction. The chain is Exoribonuclease 2 from Klebsiella pneumoniae subsp. pneumoniae (strain ATCC 700721 / MGH 78578).